The sequence spans 393 residues: Phosphoglycerate kinase (393 aa).

Substrate is bound by residues 21 to 23 (DLN), Arg-36, 59 to 62 (HLGR), Arg-113, and Arg-146. ATP contacts are provided by residues Lys-197, Glu-319, and 345–348 (GGDT).

Belongs to the phosphoglycerate kinase family. As to quaternary structure, monomer.

The protein resides in the cytoplasm. The catalysed reaction is (2R)-3-phosphoglycerate + ATP = (2R)-3-phospho-glyceroyl phosphate + ADP. Its pathway is carbohydrate degradation; glycolysis; pyruvate from D-glyceraldehyde 3-phosphate: step 2/5. In Nitratidesulfovibrio vulgaris (strain ATCC 29579 / DSM 644 / CCUG 34227 / NCIMB 8303 / VKM B-1760 / Hildenborough) (Desulfovibrio vulgaris), this protein is Phosphoglycerate kinase.